The following is a 111-amino-acid chain: MSNLGQQSCSACSADAPQVTDAEKQTLLKDVPEWQLIVQDGEEQLQRVFTFKNFVQAQAFTNKVADLAEEEGHHPAILLEWGKATVRWWTHKIGGLHKNDFIMAARTDELY.

The protein belongs to the pterin-4-alpha-carbinolamine dehydratase family.

The enzyme catalyses (4aS,6R)-4a-hydroxy-L-erythro-5,6,7,8-tetrahydrobiopterin = (6R)-L-erythro-6,7-dihydrobiopterin + H2O. The protein is Putative pterin-4-alpha-carbinolamine dehydratase of Marinobacter nauticus (strain ATCC 700491 / DSM 11845 / VT8) (Marinobacter aquaeolei).